A 549-amino-acid chain; its full sequence is Glucose-6-phosphate isomerase (549 aa).

An N6-acetyllysine mark is found at Lys80, Lys228, and Lys234. Catalysis depends on Glu355, which acts as the Proton donor. Catalysis depends on residues His386 and Lys514.

It belongs to the GPI family.

The protein resides in the cytoplasm. It catalyses the reaction alpha-D-glucose 6-phosphate = beta-D-fructose 6-phosphate. It participates in carbohydrate biosynthesis; gluconeogenesis. The protein operates within carbohydrate degradation; glycolysis; D-glyceraldehyde 3-phosphate and glycerone phosphate from D-glucose: step 2/4. In terms of biological role, catalyzes the reversible isomerization of glucose-6-phosphate to fructose-6-phosphate. The sequence is that of Glucose-6-phosphate isomerase from Escherichia coli O127:H6 (strain E2348/69 / EPEC).